The sequence spans 245 residues: 2,3-bisphosphoglycerate-dependent phosphoglycerate mutase 1 (245 aa).

Substrate is bound by residues 8-15 (RHGQSLWN), 21-22 (TG), Arg60, 87-90 (ERHY), Lys98, 114-115 (RR), and 183-184 (GN). His9 (tele-phosphohistidine intermediate) is an active-site residue. Catalysis depends on Glu87, which acts as the Proton donor/acceptor.

This sequence belongs to the phosphoglycerate mutase family. BPG-dependent PGAM subfamily.

It carries out the reaction (2R)-2-phosphoglycerate = (2R)-3-phosphoglycerate. It participates in carbohydrate degradation; glycolysis; pyruvate from D-glyceraldehyde 3-phosphate: step 3/5. Its function is as follows. Catalyzes the interconversion of 2-phosphoglycerate and 3-phosphoglycerate. The polypeptide is 2,3-bisphosphoglycerate-dependent phosphoglycerate mutase 1 (Bacillus cereus (strain ATCC 10987 / NRS 248)).